The chain runs to 245 residues: 1-(5-phosphoribosyl)-5-[(5-phosphoribosylamino)methylideneamino] imidazole-4-carboxamide isomerase (245 aa).

The active-site Proton acceptor is D7. D129 (proton donor) is an active-site residue.

Belongs to the HisA/HisF family.

It localises to the cytoplasm. The catalysed reaction is 1-(5-phospho-beta-D-ribosyl)-5-[(5-phospho-beta-D-ribosylamino)methylideneamino]imidazole-4-carboxamide = 5-[(5-phospho-1-deoxy-D-ribulos-1-ylimino)methylamino]-1-(5-phospho-beta-D-ribosyl)imidazole-4-carboxamide. Its pathway is amino-acid biosynthesis; L-histidine biosynthesis; L-histidine from 5-phospho-alpha-D-ribose 1-diphosphate: step 4/9. The chain is 1-(5-phosphoribosyl)-5-[(5-phosphoribosylamino)methylideneamino] imidazole-4-carboxamide isomerase from Pectobacterium carotovorum subsp. carotovorum (strain PC1).